We begin with the raw amino-acid sequence, 579 residues long: Probable zinc metalloprotease EGY1, chloroplastic (579 aa).

Disordered stretches follow at residues 1-42 (MAAA…PASA) and 78-146 (GGGG…NEPP). The N-terminal 44 residues, 1-44 (MAAAAAALASSPMVHLTASRLRLPRPARSPAAATPSPSPASAAC), are a transit peptide targeting the chloroplast. Positions 16 to 42 (LTASRLRLPRPARSPAAATPSPSPASA) are enriched in low complexity. A compositionally biased stretch (gly residues) spans 78–92 (GGGGGGGGGGGGTGG). 2 stretches are compositionally biased toward low complexity: residues 104 to 115 (AAAAEAKVGGAV) and 125 to 137 (SGSF…SSSG). 8 helical membrane-spanning segments follow: residues 272–292 (YVIS…LGIA), 321–341 (LLPF…IQLF), 357–377 (LSIP…ITQF), 392–412 (MAGP…GLLL), 419–439 (ASDL…LGLV), 452–472 (ATVA…TTAF), 505–525 (LLGL…YVLI), and 547–567 (AALI…WDEL).

Belongs to the peptidase M50B family.

Its subcellular location is the plastid. The protein resides in the chloroplast membrane. Its function is as follows. Probable membrane-associated metalloprotease that may be involved in chloroplast development. The polypeptide is Probable zinc metalloprotease EGY1, chloroplastic (EGY1) (Oryza sativa subsp. japonica (Rice)).